The primary structure comprises 75 residues: Small ribosomal subunit protein bS18 (75 aa).

The protein belongs to the bacterial ribosomal protein bS18 family. Part of the 30S ribosomal subunit. Forms a tight heterodimer with protein bS6.

Binds as a heterodimer with protein bS6 to the central domain of the 16S rRNA, where it helps stabilize the platform of the 30S subunit. In Yersinia enterocolitica serotype O:8 / biotype 1B (strain NCTC 13174 / 8081), this protein is Small ribosomal subunit protein bS18.